The primary structure comprises 401 residues: Imidazolonepropionase (401 aa).

The Fe(3+) site is built by H66 and H68. H66 and H68 together coordinate Zn(2+). Residues R75, Y138, and H171 each contribute to the 4-imidazolone-5-propanoate site. Y138 is a binding site for N-formimidoyl-L-glutamate. A Fe(3+)-binding site is contributed by H236. H236 lines the Zn(2+) pocket. Q239 is a 4-imidazolone-5-propanoate binding site. A Fe(3+)-binding site is contributed by D311. D311 provides a ligand contact to Zn(2+). Residues N313 and G315 each coordinate N-formimidoyl-L-glutamate. T316 is a 4-imidazolone-5-propanoate binding site.

This sequence belongs to the metallo-dependent hydrolases superfamily. HutI family. Zn(2+) serves as cofactor. The cofactor is Fe(3+).

It localises to the cytoplasm. It carries out the reaction 4-imidazolone-5-propanoate + H2O = N-formimidoyl-L-glutamate. Its pathway is amino-acid degradation; L-histidine degradation into L-glutamate; N-formimidoyl-L-glutamate from L-histidine: step 3/3. Its function is as follows. Catalyzes the hydrolytic cleavage of the carbon-nitrogen bond in imidazolone-5-propanoate to yield N-formimidoyl-L-glutamate. It is the third step in the universal histidine degradation pathway. This chain is Imidazolonepropionase, found in Pseudomonas putida (strain GB-1).